The chain runs to 258 residues: Nuclear egress protein 2 (258 aa).

Residues 1 to 228 (MLKEKMYDEL…TVPIFARRNN (228 aa)) lie on the Perinuclear space side of the membrane. Residues 229 to 249 (ILCGFLVAALLIVCYVIFKEF) form a helical membrane-spanning segment. Residues 250–258 (ALSADFSAV) lie on the Nuclear side of the membrane.

This sequence belongs to the herpesviridae NEC2 protein family. Forms a heterohexameric complex with NEC1. Phosphorylated.

The protein resides in the host nucleus inner membrane. Plays an essential role in virion nuclear egress, the first step of virion release from infected cell. Within the host nucleus, NEC1 interacts with the newly formed capsid through the vertexes and directs it to the inner nuclear membrane by associating with NEC2. Induces the budding of the capsid at the inner nuclear membrane as well as its envelopment into the perinuclear space. There, the NEC1/NEC2 complex promotes the fusion of the enveloped capsid with the outer nuclear membrane and the subsequent release of the viral capsid into the cytoplasm where it will reach the secondary budding sites in the host Golgi or trans-Golgi network. The chain is Nuclear egress protein 2 from Homo sapiens (Human).